We begin with the raw amino-acid sequence, 216 residues long: Orotate phosphoribosyltransferase (216 aa).

Residues Arg-100, Lys-104, His-106, and 126–134 (EDLISTGGS) contribute to the 5-phospho-alpha-D-ribose 1-diphosphate site. Ser-130 contacts orotate.

This sequence belongs to the purine/pyrimidine phosphoribosyltransferase family. PyrE subfamily. As to quaternary structure, homodimer. Interacts with BrxC. Requires Mg(2+) as cofactor.

It carries out the reaction orotidine 5'-phosphate + diphosphate = orotate + 5-phospho-alpha-D-ribose 1-diphosphate. It participates in pyrimidine metabolism; UMP biosynthesis via de novo pathway; UMP from orotate: step 1/2. Catalyzes the transfer of a ribosyl phosphate group from 5-phosphoribose 1-diphosphate to orotate, leading to the formation of orotidine monophosphate (OMP). The protein is Orotate phosphoribosyltransferase of Bacillus subtilis (strain 168).